A 314-amino-acid polypeptide reads, in one-letter code: Protein ATP1B4 (314 aa).

Residues 1 to 17 (MATTAGEQANYLQSADS) show a composition bias toward polar residues. The interval 1–37 (MATTAGEQANYLQSADSMSDGRQHHPEEAGEKKQEEQ) is disordered. The Cytoplasmic segment spans residues 1-69 (MATTAGEQAN…VLGRDKKSWA (69 aa)). Over residues 19-37 (SDGRQHHPEEAGEKKQEEQ) the composition is skewed to basic and acidic residues. A helical transmembrane segment spans residues 70–90 (LILLFYFILYCFLAGLFALCI). Topologically, residues 91–314 (YGLLATISPY…GRVAFTLHIG (224 aa)) are extracellular. An intrachain disulfide couples C160 to C179. N-linked (GlcNAc...) asparagine glycosylation is present at N188. Cystine bridges form between C189–C205 and C228–C287. Residue N264 is glycosylated (N-linked (GlcNAc...) asparagine).

It belongs to the X(+)/potassium ATPases subunit beta family. As to quaternary structure, composed of two subunits: alpha (catalytic) and beta (accessory). Glycosylated. As to expression, expressed in skeletal muscle, liver, lung, kidney, heart, brain and skin.

The protein localises to the membrane. In terms of biological role, this is the non-catalytic component of the active enzyme, which catalyzes the hydrolysis of ATP coupled with the exchange of Na(+) and K(+) ions across the plasma membrane. This chain is Protein ATP1B4 (atp1b4), found in Xenopus laevis (African clawed frog).